The sequence spans 388 residues: Processive diacylglycerol beta-glucosyltransferase (388 aa).

This sequence belongs to the glycosyltransferase 28 family. UgtP subfamily.

It localises to the cell membrane. The enzyme catalyses a 1,2-diacyl-3-O-(beta-D-glucopyranosyl)-sn-glycerol + UDP-alpha-D-glucose = a 1,2-diacyl-3-O-(beta-D-Glc-(1-&gt;6)-beta-D-Glc)-sn-glycerol + UDP + H(+). The catalysed reaction is a 1,2-diacyl-3-O-(beta-D-Glc-(1-&gt;6)-beta-D-Glc)-sn-glycerol + UDP-alpha-D-glucose = a 1,2-diacyl-3-O-(beta-D-Glc-(1-&gt;6)-beta-D-Glc-(1-&gt;6)-beta-D-Glc)-sn-glycerol + UDP + H(+). It carries out the reaction a 1,2-diacyl-sn-glycerol + UDP-alpha-D-glucose = a 1,2-diacyl-3-O-(beta-D-glucopyranosyl)-sn-glycerol + UDP + H(+). Its pathway is glycolipid metabolism; diglucosyl-diacylglycerol biosynthesis. In terms of biological role, processive glucosyltransferase involved in the biosynthesis of both the bilayer- and non-bilayer-forming membrane glucolipids. Is able to successively transfer up to three glucosyl residues to diacylglycerol (DAG), thereby catalyzing the formation of beta-monoglucosyl-DAG (3-O-(beta-D-glucopyranosyl)-1,2-diacyl-sn-glycerol), beta-diglucosyl-DAG (3-O-(beta-D-glucopyranosyl-beta-(1-&gt;6)-D-glucopyranosyl)-1,2-diacyl-sn-glycerol) and beta-triglucosyl-DAG (3-O-(beta-D-glucopyranosyl-beta-(1-&gt;6)-D-glucopyranosyl-beta-(1-&gt;6)-D-glucopyranosyl)-1,2-diacyl-sn-glycerol). Beta-diglucosyl-DAG is the predominant glycolipid found in Bacillales and is also used as a membrane anchor for lipoteichoic acid (LTA). The protein is Processive diacylglycerol beta-glucosyltransferase of Bacillus cereus (strain ATCC 10987 / NRS 248).